The following is an 87-amino-acid chain: Phosphoribosyl-ATP pyrophosphatase (87 aa).

This sequence belongs to the PRA-PH family.

Its subcellular location is the cytoplasm. The catalysed reaction is 1-(5-phospho-beta-D-ribosyl)-ATP + H2O = 1-(5-phospho-beta-D-ribosyl)-5'-AMP + diphosphate + H(+). The protein operates within amino-acid biosynthesis; L-histidine biosynthesis; L-histidine from 5-phospho-alpha-D-ribose 1-diphosphate: step 2/9. This Arthrobacter sp. (strain FB24) protein is Phosphoribosyl-ATP pyrophosphatase.